The primary structure comprises 179 residues: Cell division protein ZapC (179 aa).

This sequence belongs to the ZapC family. In terms of assembly, interacts directly with FtsZ.

Its subcellular location is the cytoplasm. Its function is as follows. Contributes to the efficiency of the cell division process by stabilizing the polymeric form of the cell division protein FtsZ. Acts by promoting interactions between FtsZ protofilaments and suppressing the GTPase activity of FtsZ. The sequence is that of Cell division protein ZapC from Photobacterium profundum (strain SS9).